The chain runs to 366 residues: Carbamoyl phosphate synthase small chain (366 aa).

Positions 1-174 (MQEIPAILVL…GERYTVDNPD (174 aa)) are CPSase. The L-glutamine site is built by Ser48, Gly226, and Gly228. The 189-residue stretch at 178–366 (HVVAFDYGIK…FTELMERLKN (189 aa)) folds into the Glutamine amidotransferase type-1 domain. Cys256 functions as the Nucleophile in the catalytic mechanism. Residues Leu257, Gln260, Asn298, Gly300, and Phe301 each contribute to the L-glutamine site. Catalysis depends on residues His340 and Glu342.

Belongs to the CarA family. Composed of two chains; the small (or glutamine) chain promotes the hydrolysis of glutamine to ammonia, which is used by the large (or ammonia) chain to synthesize carbamoyl phosphate. Tetramer of heterodimers (alpha,beta)4.

The enzyme catalyses hydrogencarbonate + L-glutamine + 2 ATP + H2O = carbamoyl phosphate + L-glutamate + 2 ADP + phosphate + 2 H(+). It catalyses the reaction L-glutamine + H2O = L-glutamate + NH4(+). Its pathway is amino-acid biosynthesis; L-arginine biosynthesis; carbamoyl phosphate from bicarbonate: step 1/1. It functions in the pathway pyrimidine metabolism; UMP biosynthesis via de novo pathway; (S)-dihydroorotate from bicarbonate: step 1/3. In terms of biological role, small subunit of the glutamine-dependent carbamoyl phosphate synthetase (CPSase). CPSase catalyzes the formation of carbamoyl phosphate from the ammonia moiety of glutamine, carbonate, and phosphate donated by ATP, constituting the first step of 2 biosynthetic pathways, one leading to arginine and/or urea and the other to pyrimidine nucleotides. The small subunit (glutamine amidotransferase) binds and cleaves glutamine to supply the large subunit with the substrate ammonia. This Chlorobaculum tepidum (strain ATCC 49652 / DSM 12025 / NBRC 103806 / TLS) (Chlorobium tepidum) protein is Carbamoyl phosphate synthase small chain.